Here is a 156-residue protein sequence, read N- to C-terminus: SsrA-binding protein (156 aa).

The protein belongs to the SmpB family.

It localises to the cytoplasm. Its function is as follows. Required for rescue of stalled ribosomes mediated by trans-translation. Binds to transfer-messenger RNA (tmRNA), required for stable association of tmRNA with ribosomes. tmRNA and SmpB together mimic tRNA shape, replacing the anticodon stem-loop with SmpB. tmRNA is encoded by the ssrA gene; the 2 termini fold to resemble tRNA(Ala) and it encodes a 'tag peptide', a short internal open reading frame. During trans-translation Ala-aminoacylated tmRNA acts like a tRNA, entering the A-site of stalled ribosomes, displacing the stalled mRNA. The ribosome then switches to translate the ORF on the tmRNA; the nascent peptide is terminated with the 'tag peptide' encoded by the tmRNA and targeted for degradation. The ribosome is freed to recommence translation, which seems to be the essential function of trans-translation. The polypeptide is SsrA-binding protein (Clostridium botulinum (strain Alaska E43 / Type E3)).